Here is a 308-residue protein sequence, read N- to C-terminus: HTH-type transcriptional regulator YtlI (308 aa).

Residues 1 to 57 enclose the HTH lysR-type domain; it reads MELRSIKTFHTIVKFGSFYKAAEILNYSQPTISMRMKQLEQDLGVLLFERGKSLQLT. Residues 18–37 constitute a DNA-binding region (H-T-H motif); that stretch reads FYKAAEILNYSQPTISMRMK.

Belongs to the LysR transcriptional regulatory family.

Its function is as follows. Positively regulates the expression of ytmI operon in response to the availability of sulfur sources. The polypeptide is HTH-type transcriptional regulator YtlI (ytlI) (Bacillus subtilis (strain 168)).